The chain runs to 630 residues: tRNA uridine 5-carboxymethylaminomethyl modification enzyme MnmG (630 aa).

13–18 (GGGHAG) is an FAD binding site. 273 to 287 (GPRYCPSIEDKVNRF) provides a ligand contact to NAD(+).

It belongs to the MnmG family. Homodimer. Heterotetramer of two MnmE and two MnmG subunits. It depends on FAD as a cofactor.

Its subcellular location is the cytoplasm. NAD-binding protein involved in the addition of a carboxymethylaminomethyl (cmnm) group at the wobble position (U34) of certain tRNAs, forming tRNA-cmnm(5)s(2)U34. The chain is tRNA uridine 5-carboxymethylaminomethyl modification enzyme MnmG from Saccharophagus degradans (strain 2-40 / ATCC 43961 / DSM 17024).